The following is a 483-amino-acid chain: Glutamyl-tRNA(Gln) amidotransferase subunit A (483 aa).

Catalysis depends on charge relay system residues lysine 76 and serine 151. Serine 175 functions as the Acyl-ester intermediate in the catalytic mechanism.

Belongs to the amidase family. GatA subfamily. Heterotrimer of A, B and C subunits.

It catalyses the reaction L-glutamyl-tRNA(Gln) + L-glutamine + ATP + H2O = L-glutaminyl-tRNA(Gln) + L-glutamate + ADP + phosphate + H(+). Allows the formation of correctly charged Gln-tRNA(Gln) through the transamidation of misacylated Glu-tRNA(Gln) in organisms which lack glutaminyl-tRNA synthetase. The reaction takes place in the presence of glutamine and ATP through an activated gamma-phospho-Glu-tRNA(Gln). This Chromobacterium violaceum (strain ATCC 12472 / DSM 30191 / JCM 1249 / CCUG 213 / NBRC 12614 / NCIMB 9131 / NCTC 9757 / MK) protein is Glutamyl-tRNA(Gln) amidotransferase subunit A.